Reading from the N-terminus, the 383-residue chain is MKSIVYEKKLPKLTALEIAKNSKKKVICGMSGGVDSSVSAFILQQQGYQVEGLFMKNWEEDDDTDYCTAANDLADAQAVCDKLGIKLHKINFAAEYWDNVFEHFLAEYKAGRTPNPDILCNKEIKFKAFLEYAVEDLGADYIATGHYVRRSDVNGQTKLLRGLDSNKDQSYFLYTLSKDQVAQSLFPVGEIEKPIVRAIAGDLGLITAEKKDSTGICFIGERKFKDFLERFLPAQPGEIRMVDGKVIGKHDGLMYYTLGQRKGLGIGGVKGLSEDPFYVVDKDLINNVLVVAQGNDNSALLSQGLMATQLYWIDRLPIRQNLRCTVKTRYRQKDVACEVIPINDDCIEVRFDEPQIAVTPGQSAVFYQGEVCLGGGVIERQIK.

ATP is bound by residues 29–36 (GMSGGVDS) and Met55. The interval 115-117 (NPD) is interaction with target base in tRNA. Cys120 serves as the catalytic Nucleophile. Cys120 and Cys217 are joined by a disulfide. Position 145 (Gly145) interacts with ATP. Positions 167–169 (KDQ) are interaction with tRNA. Residue Cys217 is the Cysteine persulfide intermediate of the active site. Residues 329–330 (RY) form an interaction with tRNA region.

This sequence belongs to the MnmA/TRMU family.

It is found in the cytoplasm. It catalyses the reaction S-sulfanyl-L-cysteinyl-[protein] + uridine(34) in tRNA + AH2 + ATP = 2-thiouridine(34) in tRNA + L-cysteinyl-[protein] + A + AMP + diphosphate + H(+). In terms of biological role, catalyzes the 2-thiolation of uridine at the wobble position (U34) of tRNA, leading to the formation of s(2)U34. This is tRNA-specific 2-thiouridylase MnmA from Histophilus somni (strain 2336) (Haemophilus somnus).